Consider the following 577-residue polypeptide: Efflux pump notK' (577 aa).

N-linked (GlcNAc...) asparagine glycosylation is found at Asn62 and Asn84. A run of 5 helical transmembrane segments spans residues 104-124 (AAIA…PVAL), 151-171 (LAVT…MLGI), 189-209 (AGIG…LGLV), 241-261 (NPTM…LMMY), and 265-285 (GAVI…TTPV). The N-linked (GlcNAc...) asparagine glycan is linked to Asn320. Helical transmembrane passes span 328 to 348 (FGLA…GTLY), 373 to 393 (VDAI…TAFV), 413 to 433 (GICF…PPWA), 434 to 454 (TGST…EINW), and 476 to 496 (IADG…GVWV). The span at 555-566 (MPPNGSMSSGSP) shows a compositional bias: low complexity. The tract at residues 555–577 (MPPNGSMSSGSPEQVAEKAVGKY) is disordered. An N-linked (GlcNAc...) asparagine glycan is attached at Asn558.

Belongs to the nucleobase:cation symporter-2 (NCS2) (TC 2.A.40) family. Azg-like subfamily.

It is found in the cell membrane. Functionally, efflux pump; part of the gene cluster that mediates the biosynthesis of notoamide, a fungal indole alkaloid that belongs to a family of natural products containing a characteristic bicyclo[2.2.2]diazaoctane core. In Aspergillus versicolor, this protein is Efflux pump notK'.